The following is a 318-amino-acid chain: Methionyl-tRNA formyltransferase (318 aa).

115–118 (SLLP) is a (6S)-5,6,7,8-tetrahydrofolate binding site.

It belongs to the Fmt family.

The enzyme catalyses L-methionyl-tRNA(fMet) + (6R)-10-formyltetrahydrofolate = N-formyl-L-methionyl-tRNA(fMet) + (6S)-5,6,7,8-tetrahydrofolate + H(+). Its function is as follows. Attaches a formyl group to the free amino group of methionyl-tRNA(fMet). The formyl group appears to play a dual role in the initiator identity of N-formylmethionyl-tRNA by promoting its recognition by IF2 and preventing the misappropriation of this tRNA by the elongation apparatus. The protein is Methionyl-tRNA formyltransferase of Deinococcus radiodurans (strain ATCC 13939 / DSM 20539 / JCM 16871 / CCUG 27074 / LMG 4051 / NBRC 15346 / NCIMB 9279 / VKM B-1422 / R1).